The sequence spans 195 residues: uncharacterized protein (195 aa).

The segment at 86 to 158 (LPSEGGWTSG…PAPVSGEPPE (73 aa)) is disordered.

This is an uncharacterized protein from Homo sapiens (Human).